Reading from the N-terminus, the 462-residue chain is MQSRKTRALGKGRARVTSCDDTCATATEMVPDAKDRILASVRDYHREQESPTFVAGSTPIRPSGAVLDEDDRVALVEAALELRIAAGGNARRFESEFARFFGLRKAHLVNSGSSANLLALSSLTSPKLGEARLRPGDEVITAAVGFPTTINPAVQNGLVPVFVDVELGTYNATPDRIKAAVTERTRAIMLAHTLGNPFAADEIAEIAKEHELFLVEDNCDAVGSTYRGRLTGTFGDLTTVSFYPAHHITSGEGGCVLTGSLELARIIESLRDWGRDCWCEPGVDNTCRKRFDYHLGTLPPGYDHKYTFSHVGYNLKTTDLQAALALSQLSKISAFGSARRRNWRRLREGLSGLPGLLLPVATPHSDPSWFGFAITISADAGFTRAALVNFLESRNIGTRLLFGGNITRHPAFEQVRYRIADALTNSDIVTDRTFWVGVYPGITDQMIDYVVESIAEFVAKSS.

Pyridoxal 5'-phosphate contacts are provided by residues 112-113 (GS), aspartate 220, and serine 241. Histidine 246 (proton donor/acceptor) is an active-site residue. Residue asparagine 314 coordinates pyridoxal 5'-phosphate.

Belongs to the DegT/DnrJ/EryC1 family. As to quaternary structure, homodimer. Requires pyridoxal 5'-phosphate as cofactor.

The enzyme catalyses dTDP-4-dehydro-2,6-dideoxy-alpha-D-glucose + 2 reduced [2Fe-2S]-[ferredoxin] + 2 H(+) = dTDP-4-dehydro-2,3,6-trideoxy-alpha-D-hexopyranose + 2 oxidized [2Fe-2S]-[ferredoxin] + H2O. In terms of biological role, involved in the biosynthesis of forosamine ((4-dimethylamino)-2,3,4,6-tetradeoxy-alpha-D-threo-hexopyranose), a highly deoxygenated sugar component of several bioactive natural products such as the insecticidal spinosyns A and D. Catalyzes C-3 deoxygenation of dTDP-4-keto-2,6-dideoxy-alpha-D-glucose to yield dTDP-4-keto-2,3,6-trideoxy-D-glucose via a combined transamination-deoxygenation reaction. The catalysis is initiated by a transamination step in which pyridoxal 5'-phosphate (PLP) is converted to pyridoxamine 5'-phosphate (PMP) in the presence of L-glutamate. This coenzyme then forms a Schiff base with dTDP-4-keto-2,6-dideoxy-alpha-D-glucose and the resulting adduct undergoes a PMP-mediated beta-dehydration reaction to give a sugar enamine intermediate, which after a 2 electrons reduction and hydrolysis yields dTDP-4-keto-2,3,6-trideoxy-D-glucose as a product. Requires cellular reductase (ferredoxin or flavodoxin reductase) rather than a specific partner reductase. L-glutamate is 20-fold more efficient than L-aspartate as an amino donor. In the absence of an electron source and in the presence of L-glutamate, catalyzes a transamination reaction, converting dTDP-4-keto-2,6-dideoxy-alpha-D-glucose to dTDP-4-amino-2,4,6-trideoxy-D-glucose. In Saccharopolyspora spinosa, this protein is dTDP-4-dehydro-2,6-dideoxy-D-glucose 3-dehydratase.